Here is a 184-residue protein sequence, read N- to C-terminus: ATP-dependent protease subunit HslV (184 aa).

T12 is an active-site residue. Na(+)-binding residues include A166, C169, and T172.

This sequence belongs to the peptidase T1B family. HslV subfamily. In terms of assembly, a double ring-shaped homohexamer of HslV is capped on each side by a ring-shaped HslU homohexamer. The assembly of the HslU/HslV complex is dependent on binding of ATP.

It is found in the cytoplasm. It carries out the reaction ATP-dependent cleavage of peptide bonds with broad specificity.. With respect to regulation, allosterically activated by HslU binding. Protease subunit of a proteasome-like degradation complex believed to be a general protein degrading machinery. This is ATP-dependent protease subunit HslV from Brucella anthropi (strain ATCC 49188 / DSM 6882 / CCUG 24695 / JCM 21032 / LMG 3331 / NBRC 15819 / NCTC 12168 / Alc 37) (Ochrobactrum anthropi).